Here is a 790-residue protein sequence, read N- to C-terminus: Probable quinate dehydrogenase (quinone) (790 aa).

A run of 4 helical transmembrane segments spans residues 22–42, 48–68, 77–94, and 106–126; these read GSWY…LIVL, ALVY…DAGL, LMLP…WPAL, and AYGV…GMFV. Positions 171–200 are disordered; that stretch reads RSNGRPAAGSPGPTTPGEIANSDGNGAEDQ. Residues 174–187 show a composition bias toward low complexity; it reads GRPAAGSPGPTTPG.

The protein belongs to the bacterial PQQ dehydrogenase family. Pyrroloquinoline quinone serves as cofactor.

The protein resides in the cell membrane. It catalyses the reaction L-quinate + a quinone = 3-dehydroquinate + a quinol. The protein operates within aromatic compound metabolism; 3,4-dihydroxybenzoate biosynthesis; 3-dehydroquinate from D-quinate (PQQ route): step 1/1. This Xanthomonas campestris pv. juglandis (Xanthomonas arboricola pv. juglandis) protein is Probable quinate dehydrogenase (quinone) (qumA).